Here is a 243-residue protein sequence, read N- to C-terminus: Ubiquinone/menaquinone biosynthesis C-methyltransferase UbiE (243 aa).

S-adenosyl-L-methionine-binding positions include T69, D90, and 116–117 (DA).

The protein belongs to the class I-like SAM-binding methyltransferase superfamily. MenG/UbiE family.

The catalysed reaction is a 2-demethylmenaquinol + S-adenosyl-L-methionine = a menaquinol + S-adenosyl-L-homocysteine + H(+). The enzyme catalyses a 2-methoxy-6-(all-trans-polyprenyl)benzene-1,4-diol + S-adenosyl-L-methionine = a 5-methoxy-2-methyl-3-(all-trans-polyprenyl)benzene-1,4-diol + S-adenosyl-L-homocysteine + H(+). It participates in quinol/quinone metabolism; menaquinone biosynthesis; menaquinol from 1,4-dihydroxy-2-naphthoate: step 2/2. The protein operates within cofactor biosynthesis; ubiquinone biosynthesis. Methyltransferase required for the conversion of demethylmenaquinol (DMKH2) to menaquinol (MKH2) and the conversion of 2-polyprenyl-6-methoxy-1,4-benzoquinol (DDMQH2) to 2-polyprenyl-3-methyl-6-methoxy-1,4-benzoquinol (DMQH2). In Paraburkholderia xenovorans (strain LB400), this protein is Ubiquinone/menaquinone biosynthesis C-methyltransferase UbiE.